The primary structure comprises 533 residues: (E)-beta-farnesene synthase (533 aa).

Mg(2+) contacts are provided by aspartate 286 and aspartate 290. Substrate-binding residues include aspartate 286, aspartate 290, arginine 427, and asparagine 430. The short motif at 286–290 (DDMMD) is the DDXXD motif element. Residues asparagine 430 and glutamate 438 each contribute to the Mg(2+) site.

The protein belongs to the terpene synthase family. In terms of assembly, monomer. Requires Mg(2+) as cofactor. Mn(2+) is required as a cofactor.

It is found in the cytoplasm. The catalysed reaction is (2E,6E)-farnesyl diphosphate = (E)-beta-farnesene + diphosphate. It catalyses the reaction (2E,6E)-farnesyl diphosphate = alpha-copaene + diphosphate. It carries out the reaction (2E,6E)-farnesyl diphosphate = (1S,5S,6R)-alpha-bergamotene + diphosphate. The enzyme catalyses (2E,6E)-farnesyl diphosphate = (-)-(E)-beta-caryophyllene + diphosphate. The catalysed reaction is (2E,6E)-farnesyl diphosphate = delta-cadinene + diphosphate. It catalyses the reaction (2E,6E)-farnesyl diphosphate = (+)-germacrene D + diphosphate. It carries out the reaction (2E,6E)-farnesyl diphosphate = alpha-zingiberene + diphosphate. The enzyme catalyses (2E,6E)-farnesyl diphosphate = alpha-muurolene + diphosphate. The catalysed reaction is (2E,6E)-farnesyl diphosphate = (S)-beta-bisabolene + diphosphate. It catalyses the reaction (2E,6E)-farnesyl diphosphate = beta-sesquiphellandrene + diphosphate. It carries out the reaction (2E,6E)-farnesyl diphosphate = sesquisabinene A + diphosphate. The protein operates within secondary metabolite biosynthesis; terpenoid biosynthesis. In terms of biological role, sesquiterpene cyclase catalyzing mainly the production of beta-farnesene and alpha-bergamotene in equal amounts from farnesyl diphosphate. Also mediates the biosynthesis of minor sesquiterpene hydrocarbons including alpha-muurolene, beta-bisabolene, zingiberene, sesquiphellandrene, sesquisabinene A, germacrene D, delta-cadinene, alpha-copaene and (E)-beta-caryophyllene. Involved in indirect defense by producing volatile signals attracting natural enemies of herbivores. This is (E)-beta-farnesene synthase from Zea mays (Maize).